The sequence spans 288 residues: Acetyl-coenzyme A carboxylase carboxyl transferase subunit beta (288 aa).

A CoA carboxyltransferase N-terminal domain is found at 34 to 288 (LFAKCPGCKQ…TLLSFHGGVQ (255 aa)). Cysteine 38, cysteine 41, cysteine 56, and cysteine 59 together coordinate Zn(2+). The C4-type zinc finger occupies 38-59 (CPGCKQAIYQKDLGQAKICPNC).

The protein belongs to the AccD/PCCB family. In terms of assembly, acetyl-CoA carboxylase is a heterohexamer composed of biotin carboxyl carrier protein (AccB), biotin carboxylase (AccC) and two subunits each of ACCase subunit alpha (AccA) and ACCase subunit beta (AccD). It depends on Zn(2+) as a cofactor.

Its subcellular location is the cytoplasm. It carries out the reaction N(6)-carboxybiotinyl-L-lysyl-[protein] + acetyl-CoA = N(6)-biotinyl-L-lysyl-[protein] + malonyl-CoA. The protein operates within lipid metabolism; malonyl-CoA biosynthesis; malonyl-CoA from acetyl-CoA: step 1/1. Component of the acetyl coenzyme A carboxylase (ACC) complex. Biotin carboxylase (BC) catalyzes the carboxylation of biotin on its carrier protein (BCCP) and then the CO(2) group is transferred by the transcarboxylase to acetyl-CoA to form malonyl-CoA. This is Acetyl-coenzyme A carboxylase carboxyl transferase subunit beta from Streptococcus thermophilus (strain ATCC BAA-491 / LMD-9).